An 877-amino-acid chain; its full sequence is Lipophilic envelope-spanning tunnel protein B (877 aa).

The Cytoplasmic segment spans residues 1 to 19 (MSQETPASTTEAQIKNKRR). Residues 20-40 (ISPFWLLPFIALMIASWLIWD) form a helical membrane-spanning segment. Topologically, residues 41–877 (SYQDRGNTVT…WREWGTALPK (837 aa)) are periplasmic. MCE/MlaD stretches follow at residues 46 to 149 (GNTV…VALD), 160 to 272 (DLMI…GLYE), 279 to 382 (RGVI…VVPG), 391 to 499 (DVLT…PLYA), 515 to 625 (TTVS…ILYA), 634 to 737 (GGQI…LQEA), and 746 to 862 (DGLS…LLQE).

The protein belongs to the PqiB family. As to quaternary structure, homohexamer. May interact with LetA in the inner membrane. May also interact with partners in the outer membrane.

Its subcellular location is the cell inner membrane. Forms a tunnel that spans the entire periplasmic space. Is probably involved in the transport of lipids between the inner membrane and the outer membrane through the tunnel. Forms a dynamic tunnel sufficiently long to mediate lipid transport directly between the two membranes without the need for a shuttle protein. Binds phospholipids. Lipids bind inside the tunnel. Required for outer membrane homeostasis. Contributes to membrane integrity. In Escherichia coli (strain K12), this protein is Lipophilic envelope-spanning tunnel protein B.